The following is a 384-amino-acid chain: Flap endonuclease 1 (384 aa).

The segment at 1–108 is N-domain; it reads MGIHKLMDLL…GELARRQKAK (108 aa). Position 34 (Asp-34) interacts with Mg(2+). DNA is bound at residue Arg-74. Mg(2+)-binding residues include Asp-90, Glu-162, Glu-164, Asp-183, and Asp-185. An I-domain region spans residues 126-254; that stretch reads EALKQEQRNL…VNAFKLITEH (129 aa). Glu-162 contributes to the DNA binding site. Residues Gly-232 and Asp-234 each coordinate DNA. Asp-234 is a binding site for Mg(2+). Residues 340-384 form a disordered region; it reads AKEHKGSQTRLNDFFKVQPKDTSSTSKASKKPTNTKSANKKGGKK. Positions 346-354 are interaction with PCNA; it reads SQTRLNDFF. The span at 359 to 376 shows a compositional bias: low complexity; sequence KDTSSTSKASKKPTNTKS.

It belongs to the XPG/RAD2 endonuclease family. FEN1 subfamily. As to quaternary structure, interacts with PCNA. Three molecules of FEN1 bind to one PCNA trimer with each molecule binding to one PCNA monomer. PCNA stimulates the nuclease activity without altering cleavage specificity. Mg(2+) serves as cofactor. Post-translationally, phosphorylated. Phosphorylation upon DNA damage induces relocalization to the nuclear plasma.

The protein localises to the nucleus. The protein resides in the nucleolus. Its subcellular location is the nucleoplasm. It localises to the mitochondrion. In terms of biological role, structure-specific nuclease with 5'-flap endonuclease and 5'-3' exonuclease activities involved in DNA replication and repair. During DNA replication, cleaves the 5'-overhanging flap structure that is generated by displacement synthesis when DNA polymerase encounters the 5'-end of a downstream Okazaki fragment. It enters the flap from the 5'-end and then tracks to cleave the flap base, leaving a nick for ligation. Also involved in the long patch base excision repair (LP-BER) pathway, by cleaving within the apurinic/apyrimidinic (AP) site-terminated flap. Acts as a genome stabilization factor that prevents flaps from equilibrating into structures that lead to duplications and deletions. Also possesses 5'-3' exonuclease activity on nicked or gapped double-stranded DNA, and exhibits RNase H activity. Also involved in replication and repair of rDNA and in repairing mitochondrial DNA. This is Flap endonuclease 1 from Tetrahymena thermophila (strain SB210).